The sequence spans 216 residues: Probable nicotinate-nucleotide adenylyltransferase (216 aa).

It belongs to the NadD family.

It carries out the reaction nicotinate beta-D-ribonucleotide + ATP + H(+) = deamido-NAD(+) + diphosphate. Its pathway is cofactor biosynthesis; NAD(+) biosynthesis; deamido-NAD(+) from nicotinate D-ribonucleotide: step 1/1. Catalyzes the reversible adenylation of nicotinate mononucleotide (NaMN) to nicotinic acid adenine dinucleotide (NaAD). The sequence is that of Probable nicotinate-nucleotide adenylyltransferase from Citrifermentans bemidjiense (strain ATCC BAA-1014 / DSM 16622 / JCM 12645 / Bem) (Geobacter bemidjiensis).